We begin with the raw amino-acid sequence, 258 residues long: Trans-aconitate 2-methyltransferase (258 aa).

Belongs to the methyltransferase superfamily. Tam family.

It localises to the cytoplasm. The enzyme catalyses trans-aconitate + S-adenosyl-L-methionine = (E)-3-(methoxycarbonyl)pent-2-enedioate + S-adenosyl-L-homocysteine. Functionally, catalyzes the S-adenosylmethionine monomethyl esterification of trans-aconitate. This is Trans-aconitate 2-methyltransferase from Methylobacterium nodulans (strain LMG 21967 / CNCM I-2342 / ORS 2060).